The chain runs to 124 residues: Small ribosomal subunit protein uS12 (124 aa).

Positions 1-28 (MPTINQLVRKGRTPKVSKTKAPALKGSP) are disordered. Residues 9-18 (RKGRTPKVSK) are compositionally biased toward basic residues. Asp-89 is modified (3-methylthioaspartic acid).

The protein belongs to the universal ribosomal protein uS12 family. As to quaternary structure, part of the 30S ribosomal subunit. Contacts proteins S8 and S17. May interact with IF1 in the 30S initiation complex.

With S4 and S5 plays an important role in translational accuracy. Functionally, interacts with and stabilizes bases of the 16S rRNA that are involved in tRNA selection in the A site and with the mRNA backbone. Located at the interface of the 30S and 50S subunits, it traverses the body of the 30S subunit contacting proteins on the other side and probably holding the rRNA structure together. The combined cluster of proteins S8, S12 and S17 appears to hold together the shoulder and platform of the 30S subunit. The sequence is that of Small ribosomal subunit protein uS12 from Paenarthrobacter aurescens (strain TC1).